Consider the following 342-residue polypeptide: Gibberellin cluster GA4 desaturase (342 aa).

A disordered region spans residues Pro-127–Ala-183.

This sequence belongs to the asaB hydroxylase/desaturase family.

It participates in plant hormone biosynthesis; gibberellin biosynthesis. Functionally, GA4 desaturase; part of the gene cluster that mediates the biosynthesis of gibberellins (GAs), diterpenoids that may provide a selective advantage during infection of the preferred host plant, rice. Gibberellins (GAs) are diterpenoids and are synthesized via the mevalonate pathway. Biosynthesis of the major metabolite GA3 (gibberellic acid) from geranylgeranyl diphosphate (GGPP) requires 13 steps. The GGPP produced by the geranylgeranyl diphosphate synthase GGS2 is converted to ent-kaurene via ent-copalyldiphosphate in a two-step cyclization reaction performed by the bifunctional ent-copalyl diphosphate synthase/ent-kaurene synthase enzyme (CPS/KS). Ent-Kaurene is metabolized to GAs by a series of oxidation reactions catalyzed by cytochrome P450 monooxygenases. Cytochrome P450 monooxygenase P450-4 is an ent-kaurene oxidase that catalyzes the three oxidation steps between ent-kaurene and ent-kaurenoic acid. The highly multifunctional cytochrome P450 monooxygenase P450-1 then catalyzes four steps involving oxidation at two carbon atoms, in the main pathway from ent-kaurenoic acid to GA14 via GA12-aldehyde as well as producing kaurenolides and fujenoic acids as by-products. The cytochrome P450 monooxygenase P450-2 then converts GA14 to GA4 by removal of C-20. GA4 is further converted to GA7 by the GA4 desaturase DES via 1,2-desaturation before cytochrome P450 monooxygenase P450-3, a 13-hydroxylase, hydroxylates GA7 to GA3, the final product of the GA-biosynthetic pathway. The protein is Gibberellin cluster GA4 desaturase of Gibberella fujikuroi (strain CBS 195.34 / IMI 58289 / NRRL A-6831) (Bakanae and foot rot disease fungus).